Here is a 172-residue protein sequence, read N- to C-terminus: Immune protein Tsi1 (172 aa).

The N-terminal stretch at 1–19 is a signal peptide; sequence MKLLAGSFAALFLSLSAQA. Cystine bridges form between Cys-22/Cys-167, Cys-79/Cys-121, and Cys-147/Cys-155.

In terms of assembly, forms a heterotetramer with Tse1 consisting of two Tse1 dimers and two Tsi1 dimers. Formation of the complex inactivates Tse1 enzymatic activity.

Immunity protein that plays a role in preventing early activation of toxin Tse1. Binds to a large surface of Tse1 and thereby occludes the active site to specifically inhibits enzyme activity by forming a hydrogen bond with the catalytic diad. This chain is Immune protein Tsi1, found in Pseudomonas aeruginosa (strain ATCC 15692 / DSM 22644 / CIP 104116 / JCM 14847 / LMG 12228 / 1C / PRS 101 / PAO1).